The primary structure comprises 216 residues: Inner membrane assembly complex subunit 22 (216 aa).

A mitochondrion-targeting transit peptide spans 1–26 (MFMARQVLRNGLFLRSLAPIKITART). At 27–43 (VASANAGIKRKSRFDKT) the chain is on the mitochondrial matrix side. The chain crosses the membrane as a helical span at residues 44–63 (MIKPLLLVMIFGSILNAVIA). A coiled-coil region spans residues 64–93 (EKRNIIDMERKYKLKLDKLKELIRRVHDNN). Topologically, residues 64 to 216 (EKRNIIDMER…KEHDKIPKFL (153 aa)) are mitochondrial intermembrane.

In terms of assembly, component of the inner membrane assembly (INA) complex, composed of INA17 and INA22. Interacts with a subset of F(1)F(0)-ATP synthase subunits of the F(1)-domain and the peripheral stalk.

Its subcellular location is the mitochondrion inner membrane. In terms of biological role, component of the INA complex (INAC) that promotes the biogenesis of mitochondrial F(1)F(0)-ATP synthase. INAC facilitates the assembly of the peripheral stalk and promotes the assembly of the catalytic F(1)-domain with the membrane-embedded F(0)-domain. The sequence is that of Inner membrane assembly complex subunit 22 from Saccharomyces cerevisiae (strain ATCC 204508 / S288c) (Baker's yeast).